Reading from the N-terminus, the 374-residue chain is Agmatine deiminase (374 aa).

2 residues coordinate agmatine: D220 and D226. The active-site Amidino-cysteine intermediate is C366.

The protein belongs to the agmatine deiminase family. In terms of assembly, forms homodimers.

It carries out the reaction agmatine + H2O = N-carbamoylputrescine + NH4(+). It functions in the pathway amine and polyamine biosynthesis; putrescine biosynthesis via agmatine pathway; N-carbamoylputrescine from agmatine: step 1/1. Its function is as follows. Mediates the hydrolysis of agmatine into N-carbamoylputrescine in the arginine decarboxylase (ADC) pathway of putrescine biosynthesis, a basic polyamine. The polypeptide is Agmatine deiminase (Medicago truncatula (Barrel medic)).